A 113-amino-acid polypeptide reads, in one-letter code: DNA-binding protein Mevan_1162 (113 aa).

Over residues 1–12 (MDPEEIKQKKLQ) the composition is skewed to basic and acidic residues. Positions 1–22 (MDPEEIKQKKLQEMQAKAQDPE) are disordered.

It belongs to the PDCD5 family.

The protein is DNA-binding protein Mevan_1162 of Methanococcus vannielii (strain ATCC 35089 / DSM 1224 / JCM 13029 / OCM 148 / SB).